We begin with the raw amino-acid sequence, 481 residues long: uncharacterized protein (481 aa).

10 helical membrane-spanning segments follow: residues 30 to 50 (TIIILLGTGLFFTITTGFVQF), 96 to 116 (AIALGGEGAVFWMWVTAFIGM), 154 to 174 (CMAVAFALALIFTFGFAFNSV), 196 to 216 (ISLVIFTALIIFGGVKRIAII), 220 to 240 (LVPMMALFYLIMAVIILGMHI), 250 to 270 (IVQSAFSFDAAAGGMFGALVS), 311 to 331 (MLGVFVDTMIVCTCTAVIILL), 354 to 374 (IGEFGAHFLAFILLLFAYSSI), 391 to 411 (KPWLVLLFRLMVLFFVYFGAV), and 424 to 444 (VMAVMAIINLIAILMLSPIVW).

It belongs to the alanine or glycine:cation symporter (AGCS) (TC 2.A.25) family.

It is found in the cell inner membrane. This is an uncharacterized protein from Haemophilus influenzae (strain ATCC 51907 / DSM 11121 / KW20 / Rd).